Here is a 607-residue protein sequence, read N- to C-terminus: Matrix metalloproteinase-16 (607 aa).

Residues 1–31 (MILLTFSTGRRLDFVHHSGVFFLQTLLWILC) form the signal peptide. Positions 32–119 (ATVCGTEQYF…SSKFHIRRKR (88 aa)) are excised as a propeptide. A glycan (N-linked (GlcNAc...) asparagine) is linked at N83. The Cysteine switch signature appears at 99–106 (PRCGVPDQ). C101 is a Zn(2+) binding site. Topologically, residues 120–564 (YALTGQKWQH…LDNTASTVKA (445 aa)) are extracellular. Ca(2+) is bound at residue D183. The Zn(2+) site is built by H193 and D195. Ca(2+)-binding residues include D200, G201, G203, and F205. Residue H208 coordinates Zn(2+). The Ca(2+) site is built by G215, G217, and D219. A Zn(2+)-binding site is contributed by H221. Ca(2+) is bound by residues D223 and E226. H246 is a Zn(2+) binding site. The active site involves E247. Zn(2+) contacts are provided by H250 and H256. The tract at residues 281 to 340 (DDLQGIQKIYGPPDKIPPPTRPLPTVPPHRSIPPADPRKNDRPKPPRPPTGRPSYPGAKP) is disordered. Positions 294–315 (DKIPPPTRPLPTVPPHRSIPPA) are enriched in pro residues. Hemopexin repeat units lie at residues 340-388 (PNIC…WRGL), 389-434 (PPSI…GSGI), 436-484 (PHGI…KGIP), and 485-532 (ESPQ…FMGC). A disulfide bridge links C343 with C532. Residues 565 to 585 (IAIVIPCILALCLLVLVYTVF) traverse the membrane as a helical segment. The Cytoplasmic portion of the chain corresponds to 586 to 607 (QFKRKGTPRHILYCKRSMQEWV).

It belongs to the peptidase M10A family. Interacts with CSPG4 through CSPG4 chondroitin sulfate glycosaminoglycan. The cofactor is Zn(2+). Requires Ca(2+) as cofactor. The precursor is cleaved by a furin endopeptidase. As to expression, expressed in heart, brain, placenta, ovary and small intestine. Isoform Short is found in the ovary.

It localises to the cell membrane. The protein localises to the secreted. It is found in the extracellular space. Its subcellular location is the extracellular matrix. The protein resides in the cell surface. TIMP-2 shows little inhibitory activity compared to TIMP-1. TIMP-1 seems to have less binding affinity than TIMP-2 for the short isoform. In terms of biological role, endopeptidase that degrades various components of the extracellular matrix, such as collagen type III and fibronectin. Activates progelatinase A. Involved in the matrix remodeling of blood vessels. Isoform short cleaves fibronectin and also collagen type III, but at lower rate. It has no effect on type I, II, IV and V collagen. However, upon interaction with CSPG4, it may be involved in degradation and invasion of type I collagen by melanoma cells. The sequence is that of Matrix metalloproteinase-16 from Homo sapiens (Human).